Here is a 253-residue protein sequence, read N- to C-terminus: Tetraspanin-3 (253 aa).

At 1–11 the chain is on the cytoplasmic side; the sequence is MGQCGITSSKT. The chain crosses the membrane as a helical span at residues 12 to 32; the sequence is VLVFLNLIFWGAAGILCYVGA. Residues 33 to 50 are Extracellular-facing; that stretch reads YVFITYDDYDHFFEDVYT. The helical transmembrane segment at 51–71 threads the bilayer; it reads LIPAVVIIAVGALLFIIGLIG. Residues 72-85 are Cytoplasmic-facing; the sequence is CCATIRESRCGLAT. The chain crosses the membrane as a helical span at residues 86 to 106; sequence FVIILLLVFVTEVVVVVLGYV. Topologically, residues 107-212 are extracellular; it reads YRAKVENEVD…KKLQEIMMHV (106 aa). N-linked (GlcNAc...) asparagine glycosylation is found at N127, N152, N167, and N183. A helical membrane pass occupies residues 213-233; sequence IWAALAFAAIQLLGMLCACIV. At 234-253 the chain is on the cytoplasmic side; the sequence is LCRRSRDPAYELLITGGAYA.

It belongs to the tetraspanin (TM4SF) family. As to quaternary structure, interacts with claudin-11/CLDN11 and integrins.

Its subcellular location is the membrane. Its function is as follows. Regulates the proliferation and migration of oligodendrocytes, a process essential for normal myelination and repair. This is Tetraspanin-3 (TSPAN3) from Bos taurus (Bovine).